A 192-amino-acid polypeptide reads, in one-letter code: Adenylate kinase (192 aa).

10 to 15 is an ATP binding site; that stretch reads GAGKGT. The tract at residues 30 to 59 is NMP; that stretch reads STGDMLREVIAKETEVGKKAKAIISSGALV. AMP is bound by residues threonine 31, arginine 36, 57–59, 85–88, and glutamine 92; these read ALV and GYPR. The segment at 126–142 is LID; it reads RRVQETVAAGGQVRLDD. Arginine 127 serves as a coordination point for ATP. AMP-binding residues include arginine 139 and arginine 150. Isoleucine 178 contributes to the ATP binding site.

It belongs to the adenylate kinase family. In terms of assembly, monomer.

It localises to the cytoplasm. It catalyses the reaction AMP + ATP = 2 ADP. It participates in purine metabolism; AMP biosynthesis via salvage pathway; AMP from ADP: step 1/1. Its function is as follows. Catalyzes the reversible transfer of the terminal phosphate group between ATP and AMP. Plays an important role in cellular energy homeostasis and in adenine nucleotide metabolism. This Bartonella tribocorum (strain CIP 105476 / IBS 506) protein is Adenylate kinase.